Reading from the N-terminus, the 518-residue chain is Retinal dehydrogenase 2 (518 aa).

Residues 184-186 (IPW), 210-213 (KPAE), and 264-266 (STE) each bind NAD(+). Residue glutamate 286 is the Proton acceptor of the active site. The Nucleophile role is filled by cysteine 320. Residues 366 to 370 (KQYNK) and glutamate 417 contribute to the NAD(+) site.

Belongs to the aldehyde dehydrogenase family. As to quaternary structure, homotetramer.

It is found in the cytoplasm. It catalyses the reaction retinal + NAD(+) + H2O = retinoate + NADH + 2 H(+). The catalysed reaction is all-trans-retinal + NAD(+) + H2O = all-trans-retinoate + NADH + 2 H(+). It carries out the reaction all-trans-13,14-dihydroretinal + NAD(+) + H2O = all-trans-13,14-dihydroretinoate + NADH + 2 H(+). Its pathway is cofactor metabolism; retinol metabolism. Catalyzes the NAD-dependent oxidation of aldehyde substrates, such as all-trans-retinal and all-trans-13,14-dihydroretinal, to their corresponding carboxylic acids, all-trans-retinoate and all-trans-13,14-dihydroretinoate, respectively. Retinoate signaling is critical for the transcriptional control of many genes, for instance it is crucial for initiation of meiosis in both male and female. Recognizes retinal as substrate, both in its free form and when bound to cellular retinol-binding protein. Lacks activity with benzaldehyde, acetaldehyde and octanal. Displays complete lack of activity with citral. This chain is Retinal dehydrogenase 2 (ALDH1A2), found in Gallus gallus (Chicken).